Consider the following 309-residue polypeptide: Lipoyl synthase (309 aa).

Residues Cys56, Cys61, Cys67, Cys82, Cys86, Cys89, and Ser296 each contribute to the [4Fe-4S] cluster site. Residues 68 to 285 (FKRGTATFMI…RVAGLKMGFS (218 aa)) form the Radical SAM core domain.

This sequence belongs to the radical SAM superfamily. Lipoyl synthase family. The cofactor is [4Fe-4S] cluster.

Its subcellular location is the cytoplasm. It carries out the reaction [[Fe-S] cluster scaffold protein carrying a second [4Fe-4S](2+) cluster] + N(6)-octanoyl-L-lysyl-[protein] + 2 oxidized [2Fe-2S]-[ferredoxin] + 2 S-adenosyl-L-methionine + 4 H(+) = [[Fe-S] cluster scaffold protein] + N(6)-[(R)-dihydrolipoyl]-L-lysyl-[protein] + 4 Fe(3+) + 2 hydrogen sulfide + 2 5'-deoxyadenosine + 2 L-methionine + 2 reduced [2Fe-2S]-[ferredoxin]. The protein operates within protein modification; protein lipoylation via endogenous pathway; protein N(6)-(lipoyl)lysine from octanoyl-[acyl-carrier-protein]: step 2/2. In terms of biological role, catalyzes the radical-mediated insertion of two sulfur atoms into the C-6 and C-8 positions of the octanoyl moiety bound to the lipoyl domains of lipoate-dependent enzymes, thereby converting the octanoylated domains into lipoylated derivatives. The protein is Lipoyl synthase of Syntrophotalea carbinolica (strain DSM 2380 / NBRC 103641 / GraBd1) (Pelobacter carbinolicus).